A 432-amino-acid chain; its full sequence is Phosphomethylpyrimidine synthase (432 aa).

Residues Asn-66, Met-95, Tyr-124, His-163, 185-187 (SRG), 226-229 (DGLR), and Glu-265 each bind substrate. A Zn(2+)-binding site is contributed by His-269. Substrate is bound at residue Tyr-292. His-333 provides a ligand contact to Zn(2+). Residues Cys-409, Cys-412, and Cys-416 each contribute to the [4Fe-4S] cluster site.

Belongs to the ThiC family. [4Fe-4S] cluster is required as a cofactor.

The enzyme catalyses 5-amino-1-(5-phospho-beta-D-ribosyl)imidazole + S-adenosyl-L-methionine = 4-amino-2-methyl-5-(phosphooxymethyl)pyrimidine + CO + 5'-deoxyadenosine + formate + L-methionine + 3 H(+). Its pathway is cofactor biosynthesis; thiamine diphosphate biosynthesis. Its function is as follows. Catalyzes the synthesis of the hydroxymethylpyrimidine phosphate (HMP-P) moiety of thiamine from aminoimidazole ribotide (AIR) in a radical S-adenosyl-L-methionine (SAM)-dependent reaction. In Thermoanaerobacter sp. (strain X514), this protein is Phosphomethylpyrimidine synthase.